The sequence spans 280 residues: Protein FLOURY 1-like (280 aa).

The chain crosses the membrane as a helical span at residues 22–42; it reads GFGFGIFVIGCSSQFFNLVFL. Residues 153-187 are disordered; it reads VALSETELDEKNHHGEEEESEDEEESQSQNDEDQL. The span at 169 to 187 shows a compositional bias: acidic residues; the sequence is EEESEDEEESQSQNDEDQL. Residues 188–280 enclose the GTD-binding domain; sequence LDVITLRTMV…LDDDEDKIQM (93 aa).

It is found in the membrane. The polypeptide is Protein FLOURY 1-like (Arabidopsis thaliana (Mouse-ear cress)).